Here is a 465-residue protein sequence, read N- to C-terminus: MRRAAGMEDFSAEEEESWYDQQDLEQDLHLAAELGKTLLERNKELEGSLQQMYSTNEEQVQEIEYLTKQLDTLRHVNEQHAKVYEQLDLTARDLELTNHRLVLESKAAQQKIHGLTETIERLQAQVEELQAQVEQLRGLEQLRVLREKRERRRTIHTFPCLKELCTSPRCKDAFRLHSSSLELGPRPLEQENERLQTLVGALRSQVSQERQRKERAEREYTAVLQEYSELERQLCEMEACRLRVQELEAELLELQQMKQAKTYLLGPDDHLAEALLAPLTQAPEADDPQPGRGDDLGAQDGVSSPAASPGHVVRKSCSDTALNAIVAKDPASRHAGNLTLHANSVRKRGMSILREVDEQYHALLEKYEELLSKCRQHGAGVRHAGVQTSRPISRDSSWRDLRGGEEGQGEVKAGEKSLSQHVEAVDKRLEQSQPEYKALFKEIFSRIQKTKADINATKVKTHSSK.

Coiled coils occupy residues 38–143 and 188–265; these read LLER…EQLR and LEQE…TYLL. Residues 282–314 form a disordered region; the sequence is APEADDPQPGRGDDLGAQDGVSSPAASPGHVVR. S308, S318, and S344 each carry phosphoserine. Positions 350–377 form a coiled coil; that stretch reads MSILREVDEQYHALLEKYEELLSKCRQH. The segment at 382–417 is disordered; the sequence is RHAGVQTSRPISRDSSWRDLRGGEEGQGEVKAGEKS. Positions 392–405 are enriched in basic and acidic residues; the sequence is ISRDSSWRDLRGGE.

Belongs to the CDR2 family.

In Homo sapiens (Human), this protein is Cerebellar degeneration-related protein 2-like (CDR2L).